A 374-amino-acid polypeptide reads, in one-letter code: WD repeat-containing protein JIP5 (374 aa).

7 WD repeats span residues 21–61 (AYTS…GETS), 68–107 (PSKRTARALSIEENGDEIWMGGKSGSLLCALTPPKVIQLS), 120–158 (AHECPINRVYCVNRNLVATGDDDGVIKLWDPRQADSIRT), 161–200 (QHFDYISDFTYFDDKRQLVATSGDGHLSVIDIRSNKSTPL), 205–244 (DQEDELLSIVPIKGGQKAIVGSGLGILSVWNRQMGWADSV), 249–287 (GHPASIDAIVALTPDIIATGSEDGMIRVIQVLPHKFLGV), and 290–330 (THEE…EDSD). A compositionally biased stretch (acidic residues) spans 325–344 (LFEDSDEDDEMEEDEPDSDE). Positions 325–374 (LFEDSDEDDEMEEDEPDSDEEKSKKKKKDNGMKDMSRGQAENDGSFFADL) are disordered.

The protein belongs to the WD repeat WDR55 family.

It is found in the nucleus. Its subcellular location is the nucleolus. The sequence is that of WD repeat-containing protein JIP5 (JIP5) from Cryptococcus neoformans var. neoformans serotype D (strain B-3501A) (Filobasidiella neoformans).